The following is a 206-amino-acid chain: Protein GrpE (206 aa).

Residues 1-10 (MTDPDLHQND) show a composition bias toward basic and acidic residues. The segment at 1–38 (MTDPDLHQNDPENPAQASEPVVSKPYIMPDDPETGSAE) is disordered.

The protein belongs to the GrpE family. Homodimer.

The protein localises to the cytoplasm. Its function is as follows. Participates actively in the response to hyperosmotic and heat shock by preventing the aggregation of stress-denatured proteins, in association with DnaK and GrpE. It is the nucleotide exchange factor for DnaK and may function as a thermosensor. Unfolded proteins bind initially to DnaJ; upon interaction with the DnaJ-bound protein, DnaK hydrolyzes its bound ATP, resulting in the formation of a stable complex. GrpE releases ADP from DnaK; ATP binding to DnaK triggers the release of the substrate protein, thus completing the reaction cycle. Several rounds of ATP-dependent interactions between DnaJ, DnaK and GrpE are required for fully efficient folding. In Bradyrhizobium sp. (strain ORS 278), this protein is Protein GrpE.